Consider the following 159-residue polypeptide: Small ribosomal subunit protein uS7 (159 aa).

This sequence belongs to the universal ribosomal protein uS7 family. In terms of assembly, part of the 30S ribosomal subunit. Contacts proteins S9 and S11.

One of the primary rRNA binding proteins, it binds directly to 16S rRNA where it nucleates assembly of the head domain of the 30S subunit. Is located at the subunit interface close to the decoding center, probably blocks exit of the E-site tRNA. This is Small ribosomal subunit protein uS7 from Rickettsia felis (strain ATCC VR-1525 / URRWXCal2) (Rickettsia azadi).